The primary structure comprises 605 residues: ABC transporter E family member 2 (605 aa).

One can recognise a 4Fe-4S ferredoxin-type domain in the interval lysine 46–leucine 75. 2 consecutive ABC transporter domains span residues isoleucine 70–glycine 315 and isoleucine 344–leucine 568. Residues glycine 110–serine 117 and glycine 381–threonine 388 contribute to the ATP site.

Belongs to the ABC transporter superfamily. ABCE family. As to expression, expressed in roots, stems, leaves, flowers and siliques.

Its subcellular location is the membrane. The polypeptide is ABC transporter E family member 2 (ABCE2) (Arabidopsis thaliana (Mouse-ear cress)).